Here is a 159-residue protein sequence, read N- to C-terminus: MAPKGSERTVKKVVAENRKARFNYEIVDTYEAGLVLTGTEVKSLREGKANIAESYATDEGGEIWLINSYLPEYLQANRFNHETRRRRKLLLSKREVNRLQGAVNREGMSLIPLRIYFNERGRVKLELALGKGKKLHDKRETSKERDWNRQKNRLLKERG.

The segment at 134 to 159 (KLHDKRETSKERDWNRQKNRLLKERG) is disordered. Positions 137-159 (DKRETSKERDWNRQKNRLLKERG) are enriched in basic and acidic residues.

The protein belongs to the SmpB family.

The protein resides in the cytoplasm. Functionally, required for rescue of stalled ribosomes mediated by trans-translation. Binds to transfer-messenger RNA (tmRNA), required for stable association of tmRNA with ribosomes. tmRNA and SmpB together mimic tRNA shape, replacing the anticodon stem-loop with SmpB. tmRNA is encoded by the ssrA gene; the 2 termini fold to resemble tRNA(Ala) and it encodes a 'tag peptide', a short internal open reading frame. During trans-translation Ala-aminoacylated tmRNA acts like a tRNA, entering the A-site of stalled ribosomes, displacing the stalled mRNA. The ribosome then switches to translate the ORF on the tmRNA; the nascent peptide is terminated with the 'tag peptide' encoded by the tmRNA and targeted for degradation. The ribosome is freed to recommence translation, which seems to be the essential function of trans-translation. In Rhizobium meliloti (strain 1021) (Ensifer meliloti), this protein is SsrA-binding protein.